A 605-amino-acid polypeptide reads, in one-letter code: Dynein axonemal intermediate chain 2 (605 aa).

7 WD repeats span residues 150–203, 208–246, 253–294, 301–347, 355–393, 399–437, and 443–481; these read KTIN…IWDL, KPEL…CWDT, AELS…WWDI, TEVV…SCNR, KIVC…IWSE, SIMW…IWDF, and DPTL…LLEV. The tract at residues 568–605 is disordered; that stretch reads IKLTPVPQQPSPEEDQVVEEGEEAAGEEGDEEVEEDLA. A compositionally biased stretch (acidic residues) spans 579–605; sequence PEEDQVVEEGEEAAGEEGDEEVEEDLA.

It belongs to the dynein intermediate chain family. As to quaternary structure, consists of at least two heavy chains and a number of intermediate and light chains. Interacts with DNAAF2. Interacts with DNAAF6/PIH1D3. Interacts with HEATR2; probably involved in outer arm dynein assembly. Interacts with CFAP53. In terms of tissue distribution, highly expressed in trachea and testis. Expressed in respiratory ciliated cells (at protein level).

The protein resides in the cytoplasm. It localises to the cytoskeleton. Its subcellular location is the cilium axoneme. It is found in the dynein axonemal particle. Part of the dynein complex of respiratory cilia. The polypeptide is Dynein axonemal intermediate chain 2 (Homo sapiens (Human)).